The primary structure comprises 309 residues: Homoserine O-succinyltransferase (309 aa).

Residue cysteine 142 is the Acyl-thioester intermediate of the active site. Residues lysine 163 and serine 192 each coordinate substrate. The active-site Proton acceptor is histidine 235. Glutamate 237 is an active-site residue. Arginine 249 is a substrate binding site.

Belongs to the MetA family. In terms of assembly, homodimer.

It is found in the cytoplasm. The catalysed reaction is L-homoserine + succinyl-CoA = O-succinyl-L-homoserine + CoA. Its pathway is amino-acid biosynthesis; L-methionine biosynthesis via de novo pathway; O-succinyl-L-homoserine from L-homoserine: step 1/1. In terms of biological role, transfers a succinyl group from succinyl-CoA to L-homoserine, forming succinyl-L-homoserine. This is Homoserine O-succinyltransferase from Shigella sonnei (strain Ss046).